Reading from the N-terminus, the 319-residue chain is Acetyl esterase (319 aa).

The Involved in the stabilization of the negatively charged intermediate by the formation of the oxyanion hole motif lies at 91-93; that stretch reads HGG. Catalysis depends on residues Ser-165, Asp-262, and His-292.

The protein belongs to the 'GDXG' lipolytic enzyme family. As to quaternary structure, homodimer. Interacts with MalT and MelA.

It is found in the cytoplasm. Functionally, displays esterase activity towards short chain fatty esters (acyl chain length of up to 8 carbons). Able to hydrolyze triacetylglycerol (triacetin) and tributyrylglycerol (tributyrin), but not trioleylglycerol (triolein) or cholesterol oleate. Negatively regulates MalT activity by antagonizing maltotriose binding. Inhibits MelA galactosidase activity. This chain is Acetyl esterase, found in Escherichia coli O6:H1 (strain CFT073 / ATCC 700928 / UPEC).